A 200-amino-acid polypeptide reads, in one-letter code: 7-methyl-GTP pyrophosphatase (200 aa).

The active-site Proton acceptor is Asp-69.

The protein belongs to the Maf family. YceF subfamily. The cofactor is a divalent metal cation.

It is found in the cytoplasm. It carries out the reaction N(7)-methyl-GTP + H2O = N(7)-methyl-GMP + diphosphate + H(+). Its function is as follows. Nucleoside triphosphate pyrophosphatase that hydrolyzes 7-methyl-GTP (m(7)GTP). May have a dual role in cell division arrest and in preventing the incorporation of modified nucleotides into cellular nucleic acids. The sequence is that of 7-methyl-GTP pyrophosphatase from Colwellia psychrerythraea (strain 34H / ATCC BAA-681) (Vibrio psychroerythus).